The primary structure comprises 372 residues: Queuine tRNA-ribosyltransferase (372 aa).

Asp89 serves as the catalytic Proton acceptor. Substrate is bound by residues 89–93, Asp161, and Gly232; that span reads DSGGF. Positions 262–268 are RNA binding; that stretch reads GIGDLPS. Asp281 serves as the catalytic Nucleophile. Residues 286–290 form an RNA binding; important for wobble base 34 recognition region; sequence TKAAR. The Zn(2+) site is built by Cys319, Cys321, Cys324, and His351.

It belongs to the queuine tRNA-ribosyltransferase family. In terms of assembly, homodimer. Within each dimer, one monomer is responsible for RNA recognition and catalysis, while the other monomer binds to the replacement base PreQ1. The cofactor is Zn(2+).

It catalyses the reaction 7-aminomethyl-7-carbaguanine + guanosine(34) in tRNA = 7-aminomethyl-7-carbaguanosine(34) in tRNA + guanine. The protein operates within tRNA modification; tRNA-queuosine biosynthesis. Functionally, catalyzes the base-exchange of a guanine (G) residue with the queuine precursor 7-aminomethyl-7-deazaguanine (PreQ1) at position 34 (anticodon wobble position) in tRNAs with GU(N) anticodons (tRNA-Asp, -Asn, -His and -Tyr). Catalysis occurs through a double-displacement mechanism. The nucleophile active site attacks the C1' of nucleotide 34 to detach the guanine base from the RNA, forming a covalent enzyme-RNA intermediate. The proton acceptor active site deprotonates the incoming PreQ1, allowing a nucleophilic attack on the C1' of the ribose to form the product. After dissociation, two additional enzymatic reactions on the tRNA convert PreQ1 to queuine (Q), resulting in the hypermodified nucleoside queuosine (7-(((4,5-cis-dihydroxy-2-cyclopenten-1-yl)amino)methyl)-7-deazaguanosine). The chain is Queuine tRNA-ribosyltransferase from Chlamydia trachomatis serovar A (strain ATCC VR-571B / DSM 19440 / HAR-13).